A 265-amino-acid polypeptide reads, in one-letter code: Thiazole synthase (265 aa).

Catalysis depends on lysine 103, which acts as the Schiff-base intermediate with DXP. 1-deoxy-D-xylulose 5-phosphate contacts are provided by residues glycine 164, 190–191 (AG), and 212–213 (NT).

It belongs to the ThiG family. As to quaternary structure, homotetramer. Forms heterodimers with either ThiH or ThiS.

It localises to the cytoplasm. The catalysed reaction is [ThiS sulfur-carrier protein]-C-terminal-Gly-aminoethanethioate + 2-iminoacetate + 1-deoxy-D-xylulose 5-phosphate = [ThiS sulfur-carrier protein]-C-terminal Gly-Gly + 2-[(2R,5Z)-2-carboxy-4-methylthiazol-5(2H)-ylidene]ethyl phosphate + 2 H2O + H(+). The protein operates within cofactor biosynthesis; thiamine diphosphate biosynthesis. In terms of biological role, catalyzes the rearrangement of 1-deoxy-D-xylulose 5-phosphate (DXP) to produce the thiazole phosphate moiety of thiamine. Sulfur is provided by the thiocarboxylate moiety of the carrier protein ThiS. In vitro, sulfur can be provided by H(2)S. The chain is Thiazole synthase from Bordetella pertussis (strain Tohama I / ATCC BAA-589 / NCTC 13251).